The primary structure comprises 424 residues: Glutamyl-tRNA reductase (424 aa).

Residues 49–52, Ser105, 110–112, and Gln116 each bind substrate; these read TCNR and EPQ. The Nucleophile role is filled by Cys50. Residue 185–190 coordinates NADP(+); that stretch reads GSGETA.

The protein belongs to the glutamyl-tRNA reductase family. In terms of assembly, homodimer.

It carries out the reaction (S)-4-amino-5-oxopentanoate + tRNA(Glu) + NADP(+) = L-glutamyl-tRNA(Glu) + NADPH + H(+). Its pathway is porphyrin-containing compound metabolism; protoporphyrin-IX biosynthesis; 5-aminolevulinate from L-glutamyl-tRNA(Glu): step 1/2. In terms of biological role, catalyzes the NADPH-dependent reduction of glutamyl-tRNA(Glu) to glutamate 1-semialdehyde (GSA). This Legionella pneumophila (strain Corby) protein is Glutamyl-tRNA reductase.